A 334-amino-acid chain; its full sequence is MRGSFFSRLPPQLSLLLLLLLLLSWRRVWTQEHIGTDPSKSPVAPVCPEACSCSPGGKANCSALALPAVPAGLSWQVRSLLLDRNRVSTLPPGAFADAGALLYLVLRENRLRSVHARAFWGLGVLQRLDLSSNQLETLSPGTFTPLRALSFLSLAGNRLALLEPSILGPLPLLRVLSLQDNSLSALEAGLLNSLPALDVLRLHGNPWACSCALRPLCTWLRKHPRPTSETETLLCVSPKLQTLNLLTDFPDNAFKQCTQSLAARDLAVVYALGPASFLASLAICLALGSVLTACGARRRRRRTTVRHLIRRQPDPEGPASLEDVGSPTTTAIQA.

An N-terminal signal peptide occupies residues 1–30 (MRGSFFSRLPPQLSLLLLLLLLLSWRRVWT). The Extracellular portion of the chain corresponds to 31–265 (QEHIGTDPSK…QCTQSLAARD (235 aa)). The 38-residue stretch at 38-75 (PSKSPVAPVCPEACSCSPGGKANCSALALPAVPAGLSW) folds into the LRRNT domain. Intrachain disulfides connect Cys47–Cys53 and Cys51–Cys61. 5 LRR repeats span residues 76–97 (QVRS…AFAD), 100–121 (ALLY…AFWG), 124–145 (VLQR…TFTP), 148–169 (ALSF…ILGP), and 172–194 (LLRV…LNSL). The region spanning 205-259 (NPWACSCALRPLCTWLRKHPRPTSETETLLCVSPKLQTLNLLTDFPDNAFKQCTQ) is the LRRCT domain. Cystine bridges form between Cys209/Cys235 and Cys211/Cys257. Residues 266–286 (LAVVYALGPASFLASLAICLA) form a helical membrane-spanning segment. The Cytoplasmic segment spans residues 287-334 (LGSVLTACGARRRRRRTTVRHLIRRQPDPEGPASLEDVGSPTTTAIQA). Residues 312–334 (QPDPEGPASLEDVGSPTTTAIQA) are disordered.

In terms of assembly, interacts with KCNMA1.

It is found in the cell membrane. The protein localises to the cytoplasm. It localises to the cytoskeleton. Its function is as follows. Auxiliary protein of the large-conductance, voltage and calcium-activated potassium channel (BK alpha). Required for the conversion of BK alpha channels from a high-voltage to a low-voltage activated channel type in non-excitable cells. These are characterized by negative membrane voltages and constant low levels of calcium. This is Leucine-rich repeat-containing protein 26 (Lrrc26) from Rattus norvegicus (Rat).